Here is a 186-residue protein sequence, read N- to C-terminus: Interferon beta-2 (186 aa).

The first 21 residues, 1 to 21 (MTHRCLLQMVLLLCFSTTALS), serve as a signal peptide directing secretion. Residues C52 and C161 are joined by a disulfide bond. Residues N131 and N173 are each glycosylated (N-linked (GlcNAc...) asparagine).

This sequence belongs to the alpha/beta interferon family. In terms of assembly, monomer.

It is found in the secreted. Functionally, has antiviral, antibacterial and anticancer activities. This Bos taurus (Bovine) protein is Interferon beta-2 (IFNB2).